A 141-amino-acid polypeptide reads, in one-letter code: Large ribosomal subunit protein uL11 (141 aa).

The protein belongs to the universal ribosomal protein uL11 family. As to quaternary structure, part of the ribosomal stalk of the 50S ribosomal subunit. Interacts with L10 and the large rRNA to form the base of the stalk. L10 forms an elongated spine to which L12 dimers bind in a sequential fashion forming a multimeric L10(L12)X complex. In terms of processing, one or more lysine residues are methylated.

Forms part of the ribosomal stalk which helps the ribosome interact with GTP-bound translation factors. The sequence is that of Large ribosomal subunit protein uL11 from Nautilia profundicola (strain ATCC BAA-1463 / DSM 18972 / AmH).